Consider the following 180-residue polypeptide: Large ribosomal subunit protein uL6 (180 aa).

The protein belongs to the universal ribosomal protein uL6 family. As to quaternary structure, part of the 50S ribosomal subunit.

In terms of biological role, this protein binds to the 23S rRNA, and is important in its secondary structure. It is located near the subunit interface in the base of the L7/L12 stalk, and near the tRNA binding site of the peptidyltransferase center. This chain is Large ribosomal subunit protein uL6, found in Salinispora tropica (strain ATCC BAA-916 / DSM 44818 / JCM 13857 / NBRC 105044 / CNB-440).